Consider the following 363-residue polypeptide: Cyclin-D1-1 (363 aa).

The tract at residues 39 to 77 is disordered; the sequence is ELEREGEPAQGSSPSSSLSCAAAAAAAADDDDEDEDEHG. Low complexity predominate over residues 50–65; it reads SSPSSSLSCAAAAAAA. The segment covering 66-75 has biased composition (acidic residues); sequence ADDDDEDEDE.

This sequence belongs to the cyclin family. Cyclin D subfamily.

This chain is Cyclin-D1-1 (CYCD1-1), found in Oryza sativa subsp. japonica (Rice).